The primary structure comprises 72 residues: Cytochrome c oxidase subunit 8C, mitochondrial (72 aa).

A mitochondrion-targeting transit peptide spans Met1–Ser29. At His30–Thr40 the chain is on the mitochondrial matrix side. A helical transmembrane segment spans residues Pro41 to Ser64. The Mitochondrial intermembrane portion of the chain corresponds to Asn65–Glu72.

Belongs to the cytochrome c oxidase VIII family. In terms of assembly, component of the cytochrome c oxidase (complex IV, CIV), a multisubunit enzyme composed of 14 subunits. The complex is composed of a catalytic core of 3 subunits MT-CO1, MT-CO2 and MT-CO3, encoded in the mitochondrial DNA, and 11 supernumerary subunits COX4I, COX5A, COX5B, COX6A, COX6B, COX6C, COX7A, COX7B, COX7C, COX8 and NDUFA4, which are encoded in the nuclear genome. The complex exists as a monomer or a dimer and forms supercomplexes (SCs) in the inner mitochondrial membrane with NADH-ubiquinone oxidoreductase (complex I, CI) and ubiquinol-cytochrome c oxidoreductase (cytochrome b-c1 complex, complex III, CIII), resulting in different assemblies (supercomplex SCI(1)III(2)IV(1) and megacomplex MCI(2)III(2)IV(2)).

Its subcellular location is the mitochondrion inner membrane. It participates in energy metabolism; oxidative phosphorylation. Functionally, component of the cytochrome c oxidase, the last enzyme in the mitochondrial electron transport chain which drives oxidative phosphorylation. The respiratory chain contains 3 multisubunit complexes succinate dehydrogenase (complex II, CII), ubiquinol-cytochrome c oxidoreductase (cytochrome b-c1 complex, complex III, CIII) and cytochrome c oxidase (complex IV, CIV), that cooperate to transfer electrons derived from NADH and succinate to molecular oxygen, creating an electrochemical gradient over the inner membrane that drives transmembrane transport and the ATP synthase. Cytochrome c oxidase is the component of the respiratory chain that catalyzes the reduction of oxygen to water. Electrons originating from reduced cytochrome c in the intermembrane space (IMS) are transferred via the dinuclear copper A center (CU(A)) of subunit 2 and heme A of subunit 1 to the active site in subunit 1, a binuclear center (BNC) formed by heme A3 and copper B (CU(B)). The BNC reduces molecular oxygen to 2 water molecules using 4 electrons from cytochrome c in the IMS and 4 protons from the mitochondrial matrix. In Rattus norvegicus (Rat), this protein is Cytochrome c oxidase subunit 8C, mitochondrial (Cox8c).